A 355-amino-acid chain; its full sequence is Peptide chain release factor 1 (355 aa).

Gln-233 bears the N5-methylglutamine mark.

The protein belongs to the prokaryotic/mitochondrial release factor family. In terms of processing, methylated by PrmC. Methylation increases the termination efficiency of RF1.

The protein resides in the cytoplasm. In terms of biological role, peptide chain release factor 1 directs the termination of translation in response to the peptide chain termination codons UAG and UAA. The chain is Peptide chain release factor 1 from Amoebophilus asiaticus (strain 5a2).